A 433-amino-acid chain; its full sequence is Trigger factor (433 aa).

The PPIase FKBP-type domain occupies 161-246 (GKRVSIDFVG…VNKVEARELP (86 aa)).

Belongs to the FKBP-type PPIase family. Tig subfamily.

It localises to the cytoplasm. The catalysed reaction is [protein]-peptidylproline (omega=180) = [protein]-peptidylproline (omega=0). Its function is as follows. Involved in protein export. Acts as a chaperone by maintaining the newly synthesized protein in an open conformation. Functions as a peptidyl-prolyl cis-trans isomerase. The polypeptide is Trigger factor (Vibrio cholerae serotype O1 (strain ATCC 39541 / Classical Ogawa 395 / O395)).